A 260-amino-acid chain; its full sequence is Proteasome subunit alpha type-1 (260 aa).

The segment at 231–260 is disordered; it reads FLEGLEERPQRKPALPADEPAEKAEEPMEH. A compositionally biased stretch (basic and acidic residues) spans 250–260; sequence PAEKAEEPMEH.

Belongs to the peptidase T1A family. In terms of assembly, the 26S proteasome consists of a 20S proteasome core and two 19S regulatory subunits. The 20S proteasome core is a barrel-shaped complex made of 28 subunits that are arranged in four stacked rings. The two outer rings are each formed by seven alpha subunits, and the two inner rings are formed by seven beta subunits. The proteolytic activity is exerted by three beta-subunits PSMB5, PSMB6 and PSMB7.

Its subcellular location is the cytoplasm. It localises to the nucleus. Functionally, component of the 20S core proteasome complex involved in the proteolytic degradation of most intracellular proteins. This complex plays numerous essential roles within the cell by associating with different regulatory particles. Associated with two 19S regulatory particles, forms the 26S proteasome and thus participates in the ATP-dependent degradation of ubiquitinated proteins. The 26S proteasome plays a key role in the maintenance of protein homeostasis by removing misfolded or damaged proteins that could impair cellular functions, and by removing proteins whose functions are no longer required. Associated with the PA200 or PA28, the 20S proteasome mediates ubiquitin-independent protein degradation. This type of proteolysis is required in several pathways including spermatogenesis (20S-PA200 complex) or generation of a subset of MHC class I-presented antigenic peptides (20S-PA28 complex). This chain is Proteasome subunit alpha type-1 (PSMA1), found in Gallus gallus (Chicken).